A 327-amino-acid polypeptide reads, in one-letter code: Quinone oxidoreductase 1 (327 aa).

NADP(+) contacts are provided by residues 42–46 (FIDTY), Tyr130, 152–153 (GV), 173–177 (GTAQK), Tyr192, Ser216, 238–241 (FGNS), 264–266 (PSL), and Arg317.

This sequence belongs to the zinc-containing alcohol dehydrogenase family. Quinone oxidoreductase subfamily. Homodimer.

The catalysed reaction is 2 a quinone + NADPH + H(+) = 2 a 1,4-benzosemiquinone + NADP(+). This is Quinone oxidoreductase 1 (qorA) from Escherichia coli (strain K12).